Reading from the N-terminus, the 117-residue chain is Large ribosomal subunit protein uL18 (117 aa).

This sequence belongs to the universal ribosomal protein uL18 family. In terms of assembly, part of the 50S ribosomal subunit; part of the 5S rRNA/L5/L18/L25 subcomplex. Contacts the 5S and 23S rRNAs.

This is one of the proteins that bind and probably mediate the attachment of the 5S RNA into the large ribosomal subunit, where it forms part of the central protuberance. This is Large ribosomal subunit protein uL18 from Haemophilus ducreyi (strain 35000HP / ATCC 700724).